A 407-amino-acid chain; its full sequence is MRQLLPGDTVWRNIRLATMDPQRQAPYGLVDNQALIVREGHICDIVPETQLPVSGDNIHDMQGRLVTPGLIDCHTHLVFAGNRAAEWEQRLNGASYQHISAQGGGINATVSATRACAEETLYQLARERMMRLASEGVTLLEIKSGYGLELATEEKLLRVAAKLAAENAIDISPTLLAAHATPAEYRDDPDGYITLVCETMIPQLWKKGLFDAVDLFCESVGFNVAQSERVLQTAKALGIPVKGHVEQLSLLGGAQLVSRYQGLSADHIEYLDEAGVAAMRDGGTVGVLLPGAFYFLRETQHPPVELLRRYQVPVAVASDFNPGTSPFCSLHLAMNMACVQFGLTPEEAWAGVTRHAARALGRQATHGQLRAGYRADFVVWDAEQPVEIVYEPGRNPLYQRVYRGKIS.

2 residues coordinate Fe(3+): histidine 74 and histidine 76. Zn(2+) contacts are provided by histidine 74 and histidine 76. 3 residues coordinate 4-imidazolone-5-propanoate: arginine 83, tyrosine 146, and histidine 179. Tyrosine 146 is an N-formimidoyl-L-glutamate binding site. Histidine 244 is a binding site for Fe(3+). Position 244 (histidine 244) interacts with Zn(2+). Glutamine 247 serves as a coordination point for 4-imidazolone-5-propanoate. Aspartate 319 contacts Fe(3+). Aspartate 319 serves as a coordination point for Zn(2+). Residues asparagine 321 and glycine 323 each coordinate N-formimidoyl-L-glutamate. Threonine 324 lines the 4-imidazolone-5-propanoate pocket.

Belongs to the metallo-dependent hydrolases superfamily. HutI family. It depends on Zn(2+) as a cofactor. Requires Fe(3+) as cofactor.

Its subcellular location is the cytoplasm. The enzyme catalyses 4-imidazolone-5-propanoate + H2O = N-formimidoyl-L-glutamate. Its pathway is amino-acid degradation; L-histidine degradation into L-glutamate; N-formimidoyl-L-glutamate from L-histidine: step 3/3. Catalyzes the hydrolytic cleavage of the carbon-nitrogen bond in imidazolone-5-propanoate to yield N-formimidoyl-L-glutamate. It is the third step in the universal histidine degradation pathway. This Salmonella paratyphi A (strain ATCC 9150 / SARB42) protein is Imidazolonepropionase.